We begin with the raw amino-acid sequence, 122 residues long: Small ribosomal subunit protein uS13 (122 aa).

The segment at 89 to 122 (GLRHRRGLPARGQRTKTNARTRKGPRRGVAGKRK) is disordered.

This sequence belongs to the universal ribosomal protein uS13 family. Part of the 30S ribosomal subunit. Forms a loose heterodimer with protein S19. Forms two bridges to the 50S subunit in the 70S ribosome.

In terms of biological role, located at the top of the head of the 30S subunit, it contacts several helices of the 16S rRNA. In the 70S ribosome it contacts the 23S rRNA (bridge B1a) and protein L5 of the 50S subunit (bridge B1b), connecting the 2 subunits; these bridges are implicated in subunit movement. Contacts the tRNAs in the A and P-sites. The protein is Small ribosomal subunit protein uS13 of Oleidesulfovibrio alaskensis (strain ATCC BAA-1058 / DSM 17464 / G20) (Desulfovibrio alaskensis).